The chain runs to 163 residues: NADH-quinone oxidoreductase subunit I (163 aa).

4Fe-4S ferredoxin-type domains are found at residues 53 to 83 (LRRY…IEAG) and 94 to 123 (VRYD…EGPN). [4Fe-4S] cluster is bound by residues Cys-63, Cys-66, Cys-69, Cys-73, Cys-103, Cys-106, Cys-109, and Cys-113.

The protein belongs to the complex I 23 kDa subunit family. NDH-1 is composed of 14 different subunits. Subunits NuoA, H, J, K, L, M, N constitute the membrane sector of the complex. [4Fe-4S] cluster serves as cofactor.

The protein localises to the cell inner membrane. The enzyme catalyses a quinone + NADH + 5 H(+)(in) = a quinol + NAD(+) + 4 H(+)(out). NDH-1 shuttles electrons from NADH, via FMN and iron-sulfur (Fe-S) centers, to quinones in the respiratory chain. The immediate electron acceptor for the enzyme in this species is believed to be ubiquinone. Couples the redox reaction to proton translocation (for every two electrons transferred, four hydrogen ions are translocated across the cytoplasmic membrane), and thus conserves the redox energy in a proton gradient. The protein is NADH-quinone oxidoreductase subunit I of Allorhizobium ampelinum (strain ATCC BAA-846 / DSM 112012 / S4) (Agrobacterium vitis (strain S4)).